The sequence spans 59 residues: uncharacterized protein (59 aa).

The N-terminal stretch at methionine 1–alanine 17 is a signal peptide.

This is an uncharacterized protein from Rickettsia prowazekii (strain Madrid E).